The chain runs to 351 residues: Peptide chain release factor 1 (351 aa).

Gln229 bears the N5-methylglutamine mark.

It belongs to the prokaryotic/mitochondrial release factor family. Methylated by PrmC. Methylation increases the termination efficiency of RF1.

It localises to the cytoplasm. In terms of biological role, peptide chain release factor 1 directs the termination of translation in response to the peptide chain termination codons UAG and UAA. The sequence is that of Peptide chain release factor 1 from Ruegeria pomeroyi (strain ATCC 700808 / DSM 15171 / DSS-3) (Silicibacter pomeroyi).